The sequence spans 132 residues: S-protein homolog 15 (132 aa).

The N-terminal stretch at 1–20 (MSRLIFFILVTAIYFVGNEA) is a signal peptide.

This sequence belongs to the plant self-incompatibility (S1) protein family.

The protein resides in the secreted. In Arabidopsis thaliana (Mouse-ear cress), this protein is S-protein homolog 15.